Here is a 122-residue protein sequence, read N- to C-terminus: Phospholipase A2 homolog ECS_00014 (122 aa).

7 disulfides stabilise this stretch: Cys26–Cys115, Cys28–Cys44, Cys43–Cys95, Cys49–Cys122, Cys50–Cys88, Cys57–Cys81, and Cys75–Cys86. The segment at 105–117 (KKYTYYPNFWCKG) is important for membrane-damaging activities in eukaryotes and bacteria; heparin-binding.

Belongs to the phospholipase A2 family. Group II subfamily. S49 sub-subfamily. Monomer. As to expression, expressed by the venom gland.

Its subcellular location is the secreted. Snake venom phospholipase A2 homolog that lacks enzymatic activity. Shows high myotoxin activities and displays edema-inducing activities. Has cytotoxic activities against HUVEC cells (LC(50)=12.2 uL) and human lung adenocarcinoma A549 cells (LC(50)=8.5 uL). This Echis carinatus sochureki (Saw-scaled viper) protein is Phospholipase A2 homolog ECS_00014.